Consider the following 336-residue polypeptide: DNA repair protein RAD51 homolog A (336 aa).

Residues 45–74 (TVEAVAYAPKKELLNIKGISEAKAEKILAE) form the HhH domain. An ATP-binding site is contributed by 124–131 (GEFRTGKT). The Nuclear export signal motif lies at 242-257 (LARFLRMLLRLADEFG).

It belongs to the RecA family. RAD51 subfamily. As to quaternary structure, forms linear homooligomers, giving rise to a RAD51 nucleoprotein filament, which is essential for strand-pairing reactions during DNA recombination.

Its subcellular location is the nucleus. It is found in the cytoplasm. It localises to the chromosome. Functionally, plays an important role in homologous strand exchange, a key step in DNA repair through homologous recombination (HR). Binds to single-stranded DNA in an ATP-dependent manner to form nucleoprotein filaments which are essential for the homology search and strand exchange. Catalyzes the recognition of homology and strand exchange between homologous DNA partners to form a joint molecule between a processed DNA break and the repair template. Recruited to resolve stalled replication forks during replication stress. Also involved in interstrand cross-link repair. The polypeptide is DNA repair protein RAD51 homolog A (rad51-a) (Xenopus laevis (African clawed frog)).